A 166-amino-acid chain; its full sequence is Cyclic pyranopterin monophosphate synthase (166 aa).

Residues 75–77 and 115–116 contribute to the substrate site; these read MCH and ME. Asp-130 is an active-site residue.

Belongs to the MoaC family. In terms of assembly, homohexamer; trimer of dimers.

The catalysed reaction is (8S)-3',8-cyclo-7,8-dihydroguanosine 5'-triphosphate = cyclic pyranopterin phosphate + diphosphate. It functions in the pathway cofactor biosynthesis; molybdopterin biosynthesis. Functionally, catalyzes the conversion of (8S)-3',8-cyclo-7,8-dihydroguanosine 5'-triphosphate to cyclic pyranopterin monophosphate (cPMP). The polypeptide is Cyclic pyranopterin monophosphate synthase (Shouchella clausii (strain KSM-K16) (Alkalihalobacillus clausii)).